Consider the following 176-residue polypeptide: Ribosome maturation factor RimM (176 aa).

Positions 100–173 (KDEYHYHDLI…WLLINPPPGL (74 aa)) constitute a PRC barrel domain.

The protein belongs to the RimM family. As to quaternary structure, binds ribosomal protein uS19.

The protein localises to the cytoplasm. In terms of biological role, an accessory protein needed during the final step in the assembly of 30S ribosomal subunit, possibly for assembly of the head region. Essential for efficient processing of 16S rRNA. May be needed both before and after RbfA during the maturation of 16S rRNA. It has affinity for free ribosomal 30S subunits but not for 70S ribosomes. This chain is Ribosome maturation factor RimM, found in Prochlorococcus marinus (strain NATL1A).